A 228-amino-acid polypeptide reads, in one-letter code: Ribonuclease 3 (228 aa).

An RNase III domain is found at 7-132 (LSAFMDRLGH…VIAAVYLDAG (126 aa)). Mg(2+) is bound at residue Glu45. Residue Asp49 is part of the active site. The Mg(2+) site is built by Asp118 and Glu121. Glu121 is an active-site residue. Residues 157-226 (DPKTALQEWA…AKALLERLER (70 aa)) form the DRBM domain.

Belongs to the ribonuclease III family. In terms of assembly, homodimer. It depends on Mg(2+) as a cofactor.

It localises to the cytoplasm. It catalyses the reaction Endonucleolytic cleavage to 5'-phosphomonoester.. In terms of biological role, digests double-stranded RNA. Involved in the processing of ribosomal RNA precursors and of some mRNAs. Complements an E.coli disruption mutant, but the E.coli enzyme does not cleave R.capsulatus rRNA precursor, showing substrate recognition is different. Probably also processes some mRNAs, and tRNAs when they are encoded in the rRNA operon. Probably processes pre-crRNA and tracrRNA of type II CRISPR loci if present in the organism. This is Ribonuclease 3 (rnc) from Rhodobacter capsulatus (Rhodopseudomonas capsulata).